The following is a 521-amino-acid chain: Lysine--tRNA ligase (521 aa).

Residues proline 32 to asparagine 40 carry the 'HIGH' region motif. The 'KMSKS' region signature appears at lysine 280–serine 284.

The protein belongs to the class-I aminoacyl-tRNA synthetase family.

Its subcellular location is the cytoplasm. The enzyme catalyses tRNA(Lys) + L-lysine + ATP = L-lysyl-tRNA(Lys) + AMP + diphosphate. The polypeptide is Lysine--tRNA ligase (lysS) (Borreliella burgdorferi (strain ATCC 35210 / DSM 4680 / CIP 102532 / B31) (Borrelia burgdorferi)).